The chain runs to 264 residues: 3-methyl-2-oxobutanoate hydroxymethyltransferase (264 aa).

Residues D45 and D84 each coordinate Mg(2+). Residues D45–S46, D84, and K112 contribute to the 3-methyl-2-oxobutanoate site. A Mg(2+)-binding site is contributed by E114. The active-site Proton acceptor is the E181.

This sequence belongs to the PanB family. In terms of assembly, homodecamer; pentamer of dimers. It depends on Mg(2+) as a cofactor.

Its subcellular location is the cytoplasm. The enzyme catalyses 3-methyl-2-oxobutanoate + (6R)-5,10-methylene-5,6,7,8-tetrahydrofolate + H2O = 2-dehydropantoate + (6S)-5,6,7,8-tetrahydrofolate. It functions in the pathway cofactor biosynthesis; (R)-pantothenate biosynthesis; (R)-pantoate from 3-methyl-2-oxobutanoate: step 1/2. Catalyzes the reversible reaction in which hydroxymethyl group from 5,10-methylenetetrahydrofolate is transferred onto alpha-ketoisovalerate to form ketopantoate. The protein is 3-methyl-2-oxobutanoate hydroxymethyltransferase of Colwellia psychrerythraea (strain 34H / ATCC BAA-681) (Vibrio psychroerythus).